A 370-amino-acid polypeptide reads, in one-letter code: F-box protein At1g66490 (370 aa).

Positions 1-46 (MRTISDLPVALVEEILSRVPLTSLSAVRSTCKTWNALSKTQIFGKT) constitute an F-box domain.

The sequence is that of F-box protein At1g66490 from Arabidopsis thaliana (Mouse-ear cress).